Consider the following 321-residue polypeptide: uncharacterized protein (321 aa).

The Proton donor role is filled by tyrosine 60. Position 118 (histidine 118) interacts with substrate.

The protein belongs to the aldo/keto reductase family.

This is an uncharacterized protein from Schizosaccharomyces pombe (strain 972 / ATCC 24843) (Fission yeast).